We begin with the raw amino-acid sequence, 600 residues long: 1,8-cineole synthase 1, chloroplastic (600 aa).

A chloroplast-targeting transit peptide spans 1-31; the sequence is MATLRISSALIYQNTLTHHFRLRRPHRFVCK. Asp-342 provides a ligand contact to dimethylallyl diphosphate. Positions 342 and 346 each coordinate Mg(2+). The DDXXD motif signature appears at 342 to 346; that stretch reads DDIYD. Dimethylallyl diphosphate is bound by residues Glu-420, Arg-484, and Asn-487. Mg(2+)-binding residues include Asn-487, Thr-491, and Glu-495.

Belongs to the terpene synthase family. Tpsb subfamily. Requires Mg(2+) as cofactor. The cofactor is Mn(2+). Predominantly expressed in roots and at much lower levels in siliques. Not found in leaves, flowers or stems. Also detected in flowers in cv. Landsberg erecta. Not expressed in root apical meristem and elongation zone. Found in the vascular system of young roots and additionally in the cortex and epidermal cell layer of older roots.

It localises to the plastid. The protein resides in the chloroplast. It catalyses the reaction (2E)-geranyl diphosphate + H2O = 1,8-cineole + diphosphate. Its pathway is secondary metabolite biosynthesis; terpenoid biosynthesis. Functionally, involved in monoterpene (C10) biosynthesis. The major product is 1,8-cineole (52%) followed by minor amounts of sabinene (14.5%), myrcene (13.3%), (-)-(1S)-beta-pinene (7.8%), (-)-(4S)-limonene (4.0%), (E)-beta-ocimene (2.7%), alpha-terpineol (2.4%), (-)-(1S)-alpha-pinene (1.9%), terpinolene (0.8%), and (+)-alpha-thujene (0.6%). In Arabidopsis thaliana (Mouse-ear cress), this protein is 1,8-cineole synthase 1, chloroplastic (TPS27).